Here is a 510-residue protein sequence, read N- to C-terminus: Glycogen synthase (510 aa).

Residue K18 participates in ADP-alpha-D-glucose binding.

Belongs to the glycosyltransferase 1 family. Bacterial/plant glycogen synthase subfamily.

It carries out the reaction [(1-&gt;4)-alpha-D-glucosyl](n) + ADP-alpha-D-glucose = [(1-&gt;4)-alpha-D-glucosyl](n+1) + ADP + H(+). Its pathway is glycan biosynthesis; glycogen biosynthesis. In terms of biological role, synthesizes alpha-1,4-glucan chains using ADP-glucose. The sequence is that of Glycogen synthase from Bordetella parapertussis (strain 12822 / ATCC BAA-587 / NCTC 13253).